The sequence spans 398 residues: Inner membrane protein YjgN (398 aa).

The Cytoplasmic segment spans residues 1–24; that stretch reads MAQVINEMDVPSHSFVFHGTGERY. A helical membrane pass occupies residues 25–45; the sequence is FLICVVNVLLTIITLGIYLPW. The Periplasmic portion of the chain corresponds to 46-73; the sequence is ALMKCKRYLYANMEVNGQRFSYGITGGN. A helical transmembrane segment spans residues 74–94; it reads VFVSCLFFVFFYFAILMTVSA. Residue D95 is a topological domain, cytoplasmic. A helical membrane pass occupies residues 96–116; it reads MPLVGCVLTLLLLVLLIFMAA. At 117 to 142 the chain is on the periplasmic side; the sequence is KGLRHQALMTSLNGVRFSFNCSMKGF. A helical transmembrane segment spans residues 143–163; sequence WWVTFFLPILMAIGMGTVFFI. Residues 164-175 are Cytoplasmic-facing; the sequence is STKMLPANSSSS. The chain crosses the membrane as a helical span at residues 176–196; sequence VIISMVLMAIVGIVSIGIFNG. The Periplasmic segment spans residues 197–228; that stretch reads TLYSLVMSFLWSNTSFGIHRFKVKLDTTYCIK. The helical transmembrane segment at 229-249 threads the bilayer; that stretch reads YAILAFLALLPFLAVAGYIIF. The Cytoplasmic segment spans residues 250-278; that stretch reads DQILNAYDSSVYANDDIENLQQFMEMQRK. A helical membrane pass occupies residues 279–299; that stretch reads MIIAQLIYYFGIAVSTSYLTV. The Periplasmic segment spans residues 300–333; the sequence is SLRNHFMSNLSLNDGRIRFRLTLTYHGMLYRMCA. Residues 334 to 354 traverse the membrane as a helical segment; it reads LVVISGITGGLAYPLLKIWMI. The Cytoplasmic segment spans residues 355–398; sequence DWQAKNTYLLGDLDDLPLINKEEQPDKGFLASISRGVMPSLPFL.

The protein localises to the cell inner membrane. This chain is Inner membrane protein YjgN (yjgN), found in Escherichia coli (strain K12).